A 344-amino-acid chain; its full sequence is UDP-3-O-acylglucosamine N-acyltransferase (344 aa).

His236 functions as the Proton acceptor in the catalytic mechanism.

The protein belongs to the transferase hexapeptide repeat family. LpxD subfamily. Homotrimer.

It carries out the reaction a UDP-3-O-[(3R)-3-hydroxyacyl]-alpha-D-glucosamine + a (3R)-hydroxyacyl-[ACP] = a UDP-2-N,3-O-bis[(3R)-3-hydroxyacyl]-alpha-D-glucosamine + holo-[ACP] + H(+). The protein operates within bacterial outer membrane biogenesis; LPS lipid A biosynthesis. Functionally, catalyzes the N-acylation of UDP-3-O-acylglucosamine using 3-hydroxyacyl-ACP as the acyl donor. Is involved in the biosynthesis of lipid A, a phosphorylated glycolipid that anchors the lipopolysaccharide to the outer membrane of the cell. The chain is UDP-3-O-acylglucosamine N-acyltransferase from Nitratidesulfovibrio vulgaris (strain ATCC 29579 / DSM 644 / CCUG 34227 / NCIMB 8303 / VKM B-1760 / Hildenborough) (Desulfovibrio vulgaris).